The following is a 110-amino-acid chain: Large ribosomal subunit protein uL22 (110 aa).

Belongs to the universal ribosomal protein uL22 family. Part of the 50S ribosomal subunit.

This protein binds specifically to 23S rRNA; its binding is stimulated by other ribosomal proteins, e.g. L4, L17, and L20. It is important during the early stages of 50S assembly. It makes multiple contacts with different domains of the 23S rRNA in the assembled 50S subunit and ribosome. Functionally, the globular domain of the protein is located near the polypeptide exit tunnel on the outside of the subunit, while an extended beta-hairpin is found that lines the wall of the exit tunnel in the center of the 70S ribosome. In Ruthia magnifica subsp. Calyptogena magnifica, this protein is Large ribosomal subunit protein uL22.